The primary structure comprises 343 residues: MPLDDRKKKILYAVITDYIMTAEPIGSRTIAKKYNIGLSSATIRNEMADLEEMGYLEQPHTSAGRIPSDKGYRFYVDSILRNYINNDPPISYNTREEIIAEFDEIVKKYARILANITHHTTVAKMPKLNPDRIKKIQLIPVASNKMIFLVVTDTGIVKNYLLNLCQNVDRTIFEFLNNLLNEKIAGKSEKDIFEFLQQDLRQMLGEMAFIADELINTILLSLKQLQETDIYADGTSHILDFPEYKDLGKAKNFFNLLDNKSLLNEVLEPEVDFIDVRIGSENKFEEMKDLSVIKTTYKINGRVVGTIGIIGPTRMDYRKLISEINVMTKELSNLLSSIYNDEI.

This sequence belongs to the HrcA family.

In terms of biological role, negative regulator of class I heat shock genes (grpE-dnaK-dnaJ and groELS operons). Prevents heat-shock induction of these operons. This chain is Heat-inducible transcription repressor HrcA, found in Thermoanaerobacter pseudethanolicus (strain ATCC 33223 / 39E) (Clostridium thermohydrosulfuricum).